We begin with the raw amino-acid sequence, 230 residues long: Large ribosomal subunit protein uL1 (230 aa).

The protein belongs to the universal ribosomal protein uL1 family. Part of the 50S ribosomal subunit.

Its function is as follows. Binds directly to 23S rRNA. The L1 stalk is quite mobile in the ribosome, and is involved in E site tRNA release. In terms of biological role, protein L1 is also a translational repressor protein, it controls the translation of the L11 operon by binding to its mRNA. This chain is Large ribosomal subunit protein uL1, found in Caldicellulosiruptor bescii (strain ATCC BAA-1888 / DSM 6725 / KCTC 15123 / Z-1320) (Anaerocellum thermophilum).